A 328-amino-acid chain; its full sequence is tRNA uridine(34) hydroxylase (328 aa).

In terms of domain architecture, Rhodanese spans 130 to 224 (LDKDTVVLDT…YGKDPEVQGE (95 aa)). Cys-184 acts as the Cysteine persulfide intermediate in catalysis.

The protein belongs to the TrhO family.

The catalysed reaction is uridine(34) in tRNA + AH2 + O2 = 5-hydroxyuridine(34) in tRNA + A + H2O. Its function is as follows. Catalyzes oxygen-dependent 5-hydroxyuridine (ho5U) modification at position 34 in tRNAs. This chain is tRNA uridine(34) hydroxylase, found in Streptococcus pneumoniae (strain Hungary19A-6).